Consider the following 183-residue polypeptide: Integrase-like protein y4lS (183 aa).

The Resolvase/invertase-type recombinase catalytic domain occupies 2 to 136 (ARIGYARTFT…EGIAAARKRG (135 aa)).

The protein belongs to the site-specific recombinase resolvase family.

The sequence is that of Integrase-like protein y4lS from Sinorhizobium fredii (strain NBRC 101917 / NGR234).